We begin with the raw amino-acid sequence, 521 residues long: Bifunctional purine biosynthesis protein PurH (521 aa).

The MGS-like domain occupies 1-147 (MAKISRALIS…KNNADVTVLV (147 aa)).

Belongs to the PurH family.

The catalysed reaction is (6R)-10-formyltetrahydrofolate + 5-amino-1-(5-phospho-beta-D-ribosyl)imidazole-4-carboxamide = 5-formamido-1-(5-phospho-D-ribosyl)imidazole-4-carboxamide + (6S)-5,6,7,8-tetrahydrofolate. It carries out the reaction IMP + H2O = 5-formamido-1-(5-phospho-D-ribosyl)imidazole-4-carboxamide. It functions in the pathway purine metabolism; IMP biosynthesis via de novo pathway; 5-formamido-1-(5-phospho-D-ribosyl)imidazole-4-carboxamide from 5-amino-1-(5-phospho-D-ribosyl)imidazole-4-carboxamide (10-formyl THF route): step 1/1. Its pathway is purine metabolism; IMP biosynthesis via de novo pathway; IMP from 5-formamido-1-(5-phospho-D-ribosyl)imidazole-4-carboxamide: step 1/1. This chain is Bifunctional purine biosynthesis protein PurH, found in Geotalea daltonii (strain DSM 22248 / JCM 15807 / FRC-32) (Geobacter daltonii).